The sequence spans 251 residues: Elongator complex protein 6 (251 aa).

Belongs to the ELP6 family. As to quaternary structure, component of the elongator complex composed of Elp1, Elp2, Elp3, Elp4, Elp5 and Elp6. The elongator complex associates with and stabilizes microtubules; efficient interaction requires the full complex. Interacts with InR/Insulin-like receptor; the interaction may stabilize Elp6.

Its subcellular location is the cytoplasm. It localises to the nucleus. The protein localises to the cytoskeleton. The protein resides in the spindle. It participates in tRNA modification; 5-methoxycarbonylmethyl-2-thiouridine-tRNA biosynthesis. Component of the elongator complex, which is required for multiple tRNA modifications, including mcm5U (5-methoxycarbonylmethyl uridine), mcm5s2U (5-methoxycarbonylmethyl-2-thiouridine), and ncm5U (5-carbamoylmethyl uridine). The elongator complex catalyzes formation of carboxymethyluridine in the wobble base at position 34 in tRNAs. Binding by the elongator complex stabilizes microtubules and promotes their growth. This induces central spindle asymmetry, promoting polarized signaling endosome trafficking during asymmetric cell division and cell fate assignation of sensory organ precursor cells. Required in germ line cells for microtubule organization involved in oocyte polarization and chromosome organization. Involved in InR-TOR (insulin-like receptor-target of rapamycin) signaling regulation of cellular metabolism, autophagy and apoptosis. This Drosophila melanogaster (Fruit fly) protein is Elongator complex protein 6.